The sequence spans 429 residues: Cyclin-B2-2 (429 aa).

The disordered stretch occupies residues Ser66–Ser98. Residues Arg68 to Ser80 are compositionally biased toward basic and acidic residues.

Belongs to the cyclin family. Cyclin AB subfamily. As to quaternary structure, interacts with CDC20-1 and CDC20-2. In terms of tissue distribution, expressed in roots.

This Arabidopsis thaliana (Mouse-ear cress) protein is Cyclin-B2-2 (CYCB2-2).